The chain runs to 271 residues: Pyrroline-5-carboxylate reductase (271 aa).

This sequence belongs to the pyrroline-5-carboxylate reductase family.

Its subcellular location is the cytoplasm. It catalyses the reaction L-proline + NADP(+) = (S)-1-pyrroline-5-carboxylate + NADPH + 2 H(+). The catalysed reaction is L-proline + NAD(+) = (S)-1-pyrroline-5-carboxylate + NADH + 2 H(+). Its pathway is amino-acid biosynthesis; L-proline biosynthesis; L-proline from L-glutamate 5-semialdehyde: step 1/1. Functionally, catalyzes the reduction of 1-pyrroline-5-carboxylate (PCA) to L-proline. This Staphylococcus aureus (strain Mu50 / ATCC 700699) protein is Pyrroline-5-carboxylate reductase.